The following is a 313-amino-acid chain: Protochlorophyllide reductase (313 aa).

It belongs to the short-chain dehydrogenases/reductases (SDR) family. POR subfamily.

It is found in the plastid. It localises to the chloroplast. It carries out the reaction chlorophyllide a + NADP(+) = protochlorophyllide a + NADPH + H(+). It participates in porphyrin-containing compound metabolism; chlorophyll biosynthesis. In terms of biological role, phototransformation of protochlorophyllide (Pchlide) to chlorophyllide (Chlide). This chain is Protochlorophyllide reductase, found in Avena sativa (Oat).